The primary structure comprises 66 residues: MPKFKTHRASAKRFKRTGNGGLKRSHAYTSHRFHGKTKKQRRQLRKSGMVSNSDMRRIRQMLSGLK.

Composition is skewed to basic residues over residues 1–16 (MPKF…RFKR) and 23–45 (KRSH…RQLR). Residues 1–66 (MPKFKTHRAS…RIRQMLSGLK (66 aa)) are disordered.

Belongs to the bacterial ribosomal protein bL35 family.

This is Large ribosomal subunit protein bL35 from Latilactobacillus sakei subsp. sakei (strain 23K) (Lactobacillus sakei subsp. sakei).